We begin with the raw amino-acid sequence, 230 residues long: Orotidine 5'-phosphate decarboxylase (230 aa).

Residues D10, K31, 58-67 (DLKLHDIPNT), T117, R179, Q188, G208, and R209 each bind substrate. The active-site Proton donor is K60.

It belongs to the OMP decarboxylase family. Type 1 subfamily. In terms of assembly, homodimer.

It carries out the reaction orotidine 5'-phosphate + H(+) = UMP + CO2. Its pathway is pyrimidine metabolism; UMP biosynthesis via de novo pathway; UMP from orotate: step 2/2. Its function is as follows. Catalyzes the decarboxylation of orotidine 5'-monophosphate (OMP) to uridine 5'-monophosphate (UMP). The polypeptide is Orotidine 5'-phosphate decarboxylase (Staphylococcus epidermidis (strain ATCC 35984 / DSM 28319 / BCRC 17069 / CCUG 31568 / BM 3577 / RP62A)).